We begin with the raw amino-acid sequence, 587 residues long: GTPase-activating protein skywalker (587 aa).

The a 1,2-diacyl-sn-glycero-3-phospho-(1D-myo-inositol) site is built by K75 and R79. A Rab-GAP TBC domain is found at 84–275 (PINSPIRAQL…RIMDCYFHEG (192 aa)). A 1,2-diacyl-sn-glycero-3-phospho-(1D-myo-inositol) contacts are provided by residues K277, R281, and 335–339 (RGLST). One can recognise a TLDc domain in the interval 408–585 (TWTDRQFLFT…IRVLEVYGFV (178 aa)).

In terms of tissue distribution, detected in the larval ventral nerve cord and neuromuscular junction boutons (at protein level).

It is found in the cytoplasmic vesicle. It localises to the secretory vesicle. Its subcellular location is the synaptic vesicle membrane. The protein resides in the endosome membrane. GTPase-activating protein (GAP) for Rab35 which regulates synaptic vesicle (SV) protein recycling and turnover at the neuromuscular junction boutons and possibly ventral nerve cord via endosomal trafficking. Inhibits Rab35-mediated endosomal sorting which traffics old or dysfunctional SV proteins through a degradative endolysosomal route that involves the ESCRT pathway and the HOPS complex members dor, vps39 and rab7. This function is essential for preventing excessive degradation and turnover of vesicles from the readily releasable pool which leads to increased neurotransmission and eventually neurodegeneration. Preferentially binds phosphoinositides phosphorylated at the D5 position of the inositol ring, such as phosphatidylinositol 4,5-bisphosphate (PIP2) and phosphatidylinositol 3,4,5-trisphosphate (PIP3). Binding to phosphoinositides and thus membrane-association, is required for its function in regulating the turnover of synaptic-vesicle proteins. It is therefore likely that it is recruited to vesicle membranes with high phosphoinositide content and thereby selectively prevents endolysosomal degradation of these vesicles. The protein is GTPase-activating protein skywalker of Drosophila melanogaster (Fruit fly).